The sequence spans 384 residues: MAALTLRGVRELLKRVDLATVPRRHRYKKKWAATEPKFPAVRLALQNFDMTYSVQFGDLWPSIRVSLLSEQKYGALVNNFAAWDHVSAKLEQLSAKDFVNEAISHWELQSEGGQSAAPSPASWACSPNLRCFTFDRGDISRFPPARPGSLGVMEYYLMDAASLLPVLALGLQPGDIVLDLCAAPGGKTLALLQTGCCRNLAANDLSPSRIARLQKILHSYVPEEIRDGNQVRVTSWDGRKWGELEGDTYDRVLVDVPCTTDRHSLHEEENNIFKRSRKKERQILPVLQVQLLAAGLLATKPGGHVVYSTCSLSHLQNEYVVQGAIELLANQYSIQVQVEDLTHFRRVFMDTFCFFSSCQVGELVIPNLMANFGPMYFCKMRRLT.

The transit peptide at 1–25 (MAALTLRGVRELLKRVDLATVPRRH) directs the protein to the mitochondrion. S-adenosyl-L-methionine is bound by residues Gly-185, Gly-186, Lys-187, and Asp-204. Ser-206 carries the post-translational modification Phosphoserine. S-adenosyl-L-methionine contacts are provided by Arg-209, Asp-237, Gly-238, and Asp-255. Catalysis depends on Cys-310, which acts as the Nucleophile.

This sequence belongs to the class I-like SAM-binding methyltransferase superfamily. RsmB/NOP family. Heterodimer with MTERFD2/MTERF4; this interaction seems to be required for NSUN4 recruitment to the mitochondrial large ribosomal subunit.

The protein resides in the mitochondrion. The catalysed reaction is a cytidine in rRNA + S-adenosyl-L-methionine = a 5-methylcytidine in rRNA + S-adenosyl-L-homocysteine + H(+). It catalyses the reaction a cytidine in mRNA + S-adenosyl-L-methionine = a 5-methylcytidine in mRNA + S-adenosyl-L-homocysteine + H(+). Its function is as follows. Mitochondrial RNA cytosine C(5)-methyltransferase that methylates cytosine to 5-methylcytosine (m5C) in various RNAs, such as rRNAs, mRNAs and some long non-coding RNAs (lncRNAs). Involved in mitochondrial ribosome small subunit (SSU) maturation by catalyzing methylation of mitochondrial 12S rRNA; the function is independent of MTERFD2/MTERF4 and assembled mitochondrial ribosome large subunit (LSU). Targeted to LSU by MTERFD2/MTERF4 and probably is involved in a final step in ribosome biogenesis to ensure that SSU and LSU are assembled. In vitro can methylate 16S rRNA of the LSU; the methylation is enhanced by MTERFD/MTERF4. Also acts as a regulator of innate immunity by marking double-stranded mitochondrial RNAs(mt-dsRNAs) generated in response to stress: catalyzes m5C modification on mitochondrial RNAs, such as a mRNAs and lncRNAs, with a preference for the termini of light-strand lncRNAs, promoting their degradation and cytosolic release. Modified light-strand lncRNAs are then recognized by C1QBP reader and recruited to the mitochondrial degradosome complex, which promotes their degradation. In Homo sapiens (Human), this protein is 5-cytosine rRNA methyltransferase NSUN4.